Reading from the N-terminus, the 316-residue chain is Ribose-phosphate pyrophosphokinase (316 aa).

ATP contacts are provided by residues 39 to 41 (DGE) and 98 to 99 (RQ). Mg(2+) is bound by residues H133 and D172. K195 is a catalytic residue. Residues R197, D221, and 225–229 (DTANT) each bind D-ribose 5-phosphate.

This sequence belongs to the ribose-phosphate pyrophosphokinase family. Class I subfamily. Homohexamer. It depends on Mg(2+) as a cofactor.

Its subcellular location is the cytoplasm. It catalyses the reaction D-ribose 5-phosphate + ATP = 5-phospho-alpha-D-ribose 1-diphosphate + AMP + H(+). It participates in metabolic intermediate biosynthesis; 5-phospho-alpha-D-ribose 1-diphosphate biosynthesis; 5-phospho-alpha-D-ribose 1-diphosphate from D-ribose 5-phosphate (route I): step 1/1. Its function is as follows. Involved in the biosynthesis of the central metabolite phospho-alpha-D-ribosyl-1-pyrophosphate (PRPP) via the transfer of pyrophosphoryl group from ATP to 1-hydroxyl of ribose-5-phosphate (Rib-5-P). The protein is Ribose-phosphate pyrophosphokinase of Nitrosomonas europaea (strain ATCC 19718 / CIP 103999 / KCTC 2705 / NBRC 14298).